A 445-amino-acid chain; its full sequence is Ubiquitin carboxyl-terminal hydrolase MINDY-3 (445 aa).

The active-site Nucleophile is C51. Residue S125 is modified to Phosphoserine. The Proton acceptor role is filled by H287.

Belongs to the MINDY deubiquitinase family. FAM188 subfamily. In terms of assembly, interacts with COPS5. In terms of tissue distribution, widely expressed with high levels in heart, skeletal muscle, and kidney, and low levels in liver and brain. Also expressed in lung (at protein level).

The protein resides in the nucleus. It carries out the reaction Thiol-dependent hydrolysis of ester, thioester, amide, peptide and isopeptide bonds formed by the C-terminal Gly of ubiquitin (a 76-residue protein attached to proteins as an intracellular targeting signal).. Hydrolase that can remove 'Lys-48'-linked conjugated ubiquitin from proteins. The polypeptide is Ubiquitin carboxyl-terminal hydrolase MINDY-3 (Homo sapiens (Human)).